A 101-amino-acid chain; its full sequence is Enhancer of yellow 2 transcription factor (101 aa).

It belongs to the ENY2 family. In terms of assembly, component of the nuclear pore complex (NPC)-associated TREX-2/AMEX complex (anchoring and mRNA export complex), composed of e(y)2, xmas and PCID2. Within the TREX-2/ AMEX complex, interactions with xmas is required for localization to the nuclear periphery. Component of the SAGA transcription coactivator-HAT complexes, at least composed of Ada2b, e(y)2, Pcaf/Gcn5, Taf10 and Nipped-A/Trrap. Within the SAGA complex, e(y)2, Sgf11, and not/nonstop form an additional subcomplex of SAGA called the DUB module (deubiquitination module). Component of the THO complex, composed of at least e(y)2, HPR1, THO2, THOC5, THOC6 and THOC7. Interacts with Taf9. Interacts with su(Hw) (via zinc fingers). Interacts with the nuclear pore complex (NPC). Interaction between the TREX-2/AMEX complex and the ORC complex is required for ORC localization to mRNPs, and consequently mRNA export. Within the TREX-2/AMEX-ORC complex, interacts with Orc6 and (via N-terminus or C-terminus) with Orc3. Interacts with the zinc finger protein CG9890. As to expression, ubiquitous.

The protein localises to the nucleus. The protein resides in the nucleoplasm. It is found in the cytoplasm. It localises to the nucleus membrane. In terms of biological role, involved in mRNA export coupled transcription activation by association with both the TREX-2/AMEX and the SAGA complexes. The SAGA complex is a multiprotein complex that activates transcription by remodeling chromatin and mediating histone acetylation and deubiquitination. Within the SAGA complex, participates in a subcomplex that specifically deubiquitinates histone H2B. The SAGA complex is recruited to specific gene promoters by activators, where it is required for transcription. Required for nuclear receptor-mediated transactivation. Involved in transcription elongation by recruiting the THO complex onto nascent mRNA. The TREX-2/AMEX complex functions in docking export-competent ribonucleoprotein particles (mRNPs) to the nuclear entrance of the nuclear pore complex (nuclear basket). TREX-2/AMEX participates in mRNA export and accurate chromatin positioning in the nucleus by tethering genes to the nuclear periphery. Recruited to the su(Hw) insulators via its interaction with su(Hw) and participates in the barrier activity of such insulators. In contrast, it does not participate in the enhancer-blocking activity of the su(Hw) insulators. This chain is Enhancer of yellow 2 transcription factor, found in Drosophila melanogaster (Fruit fly).